The following is a 794-amino-acid chain: Protein SEY1 (794 aa).

Residues 1–687 are Cytoplasmic-facing; it reads MMEVIDSVLG…KRSIIKTTTA (687 aa). The GB1/RHD3-type G domain occupies 43 to 272; the sequence is GLDYHVISVF…ANPYYFKPQY (230 aa). A GTP-binding site is contributed by 53 to 60; that stretch reads GSQSSGKS. The stretch at 331–352 forms a coiled coil; sequence VDHILDDREKLGEVLKNLKQEC. The helical transmembrane segment at 688–708 threads the bilayer; the sequence is IPIWMYLLVVALGWNEFVMVL. At 709–711 the chain is on the lumenal side; that stretch reads RNP. The helical transmembrane segment at 712–732 threads the bilayer; the sequence is LLVTLVLLFGVGFIFVNKFGL. Residues 733-794 are Cytoplasmic-facing; the sequence is WGPVLNVAHN…SDNEKIEKSE (62 aa). Residues 770-794 form a disordered region; that stretch reads NSAGKESYEMKDMSDSDNEKIEKSE. A compositionally biased stretch (basic and acidic residues) spans 775–794; that stretch reads ESYEMKDMSDSDNEKIEKSE.

This sequence belongs to the TRAFAC class dynamin-like GTPase superfamily. GB1/RHD3 GTPase family. RHD3 subfamily.

The protein localises to the endoplasmic reticulum membrane. Cooperates with the reticulon proteins and tubule-shaping DP1 family proteins to generate and maintain the structure of the tubular endoplasmic reticulum network. Has GTPase activity, which is required for its function in ER organization. This chain is Protein SEY1, found in Zygosaccharomyces rouxii (strain ATCC 2623 / CBS 732 / NBRC 1130 / NCYC 568 / NRRL Y-229).